The following is a 329-amino-acid chain: G-protein coupled bile acid receptor 1 (329 aa).

At 1–15 (MMTPNSTELSAIPMG) the chain is on the extracellular side. Asn-5 carries N-linked (GlcNAc...) asparagine glycosylation. The helical transmembrane segment at 16–36 (VLGLSLALASLIVIANLLLAL) threads the bilayer. Residues 37–49 (GIALDRHLRSPPA) lie on the Cytoplasmic side of the membrane. Residues 50–70 (GCFFLSLLLAGLLTGLALPML) traverse the membrane as a helical segment. Residues 71 to 84 (PGLWSRNHQGYWSC) lie on the Extracellular side of the membrane. Cys-84 and Cys-154 are disulfide-bonded. A helical membrane pass occupies residues 85–105 (LLLHLTPNFCFLSLLANLLLV). Over 106–124 (HGERYMAVLQPLRPHGSVR) the chain is Cytoplasmic. Residues 125-145 (LALFLTWVSSLFFASLPALGW) form a helical membrane-spanning segment. Over 146–164 (NHWSPDANCSSQAVFPAPY) the chain is Extracellular. Asn-153 carries an N-linked (GlcNAc...) asparagine glycan. Residues 165–185 (LYLEVYGLLLPAVGATALLSV) form a helical membrane-spanning segment. At 186 to 229 (RVLATAHRQLCEIRRLERAVCRDVPSTLARALTWRQARAQAGAT) the chain is on the cytoplasmic side. The helical transmembrane segment at 230 to 250 (LLFLLCWGPYVATLLLSVLAY) threads the bilayer. The Extracellular portion of the chain corresponds to 251-260 (ERRPPLGPGT). Residues 261–281 (LLSLISLGSTSAAAVPVAMGL) traverse the membrane as a helical segment. Residues 282–329 (GDQRYTAPWRTAAQRCLRVLRGRAKRDNPGPSTAYHTSSQCSIDLDLN) are Cytoplasmic-facing.

It belongs to the G-protein coupled receptor 1 family.

It localises to the cell membrane. Receptor for bile acid. Bile acid-binding induces its internalization, activation of extracellular signal-regulated kinase and intracellular cAMP production. May be involved in the suppression of macrophage functions by bile acids. Involved in bile acid promoted GLP1R secretion. In Mus musculus (Mouse), this protein is G-protein coupled bile acid receptor 1 (Gpbar1).